The following is a 57-amino-acid chain: Small ribosomal subunit protein eS27 (57 aa).

Residues Cys10, Cys13, Cys29, and Cys32 each contribute to the Zn(2+) site. The segment at 10-32 (CDDCENEQVLFGKAANTVNCAVC) adopts a C4-type zinc-finger fold.

The protein belongs to the eukaryotic ribosomal protein eS27 family. In terms of assembly, part of the 30S ribosomal subunit. Zn(2+) serves as cofactor.

In Natronomonas pharaonis (strain ATCC 35678 / DSM 2160 / CIP 103997 / JCM 8858 / NBRC 14720 / NCIMB 2260 / Gabara) (Halobacterium pharaonis), this protein is Small ribosomal subunit protein eS27.